The primary structure comprises 266 residues: MDLGVAAILGVVQGISEWLPISSKTQIMLVSIWLLNASPEYAYSLGLFLEAASVLAALIYFRGVYLKALRGFVGDAEGRRWLVYILVTTLVTAVVGLPLYYVARKWLVVGHSAGFLMIVLGLAVVLNAVFLQRARFSAGLKAFDNMSLRDMAIVGIAQAVSVLPGLSRSGATVTALLLLGYKPEEAFRASFVLVPVAGLGATALAYLSEGGAVATAEALLAMAIGIVISIITIKALLEFAKSKHVVLVNVVIGLLAIAGGLLRIIF.

7 consecutive transmembrane segments (helical) span residues 41–61 (YAYS…LIYF), 82–102 (LVYI…LYYV), 106–126 (WLVV…AVVL), 159–179 (AVSV…LLLL), 191–211 (FVLV…SEGG), 213–233 (VATA…IITI), and 246–266 (VLVN…RIIF).

This sequence belongs to the UppP family.

It is found in the cell membrane. The catalysed reaction is di-trans,octa-cis-undecaprenyl diphosphate + H2O = di-trans,octa-cis-undecaprenyl phosphate + phosphate + H(+). In terms of biological role, catalyzes the dephosphorylation of undecaprenyl diphosphate (UPP). In Pyrobaculum aerophilum (strain ATCC 51768 / DSM 7523 / JCM 9630 / CIP 104966 / NBRC 100827 / IM2), this protein is Undecaprenyl-diphosphatase.